Here is a 109-residue protein sequence, read N- to C-terminus: ATP synthase subunit c (109 aa).

The next 2 helical transmembrane spans lie at 42–62 and 88–108; these read YIGT…QGFS and LALA…IIFV.

This sequence belongs to the ATPase C chain family. F-type ATPases have 2 components, F(1) - the catalytic core - and F(0) - the membrane proton channel. F(1) has five subunits: alpha(3), beta(3), gamma(1), delta(1), epsilon(1). F(0) has three main subunits: a(1), b(2) and c(10-14). The alpha and beta chains form an alternating ring which encloses part of the gamma chain. F(1) is attached to F(0) by a central stalk formed by the gamma and epsilon chains, while a peripheral stalk is formed by the delta and b chains.

The protein localises to the cell membrane. F(1)F(0) ATP synthase produces ATP from ADP in the presence of a proton or sodium gradient. F-type ATPases consist of two structural domains, F(1) containing the extramembraneous catalytic core and F(0) containing the membrane proton channel, linked together by a central stalk and a peripheral stalk. During catalysis, ATP synthesis in the catalytic domain of F(1) is coupled via a rotary mechanism of the central stalk subunits to proton translocation. Functionally, key component of the F(0) channel; it plays a direct role in translocation across the membrane. A homomeric c-ring of between 10-14 subunits forms the central stalk rotor element with the F(1) delta and epsilon subunits. The chain is ATP synthase subunit c from Ureaplasma parvum serovar 3 (strain ATCC 27815 / 27 / NCTC 11736).